The sequence spans 153 residues: Small ribosomal subunit protein uS19A (153 aa).

This sequence belongs to the universal ribosomal protein uS19 family. As to quaternary structure, component of the small ribosomal subunit (SSU). Mature yeast ribosomes consist of a small (40S) and a large (60S) subunit. The 40S small subunit contains 1 molecule of ribosomal RNA (18S rRNA) and at least 33 different proteins. The large 60S subunit contains 3 rRNA molecules (25S, 5.8S and 5S rRNA) and at least 46 different proteins.

The protein localises to the cytoplasm. It is found in the nucleus. The protein resides in the nucleolus. Component of the ribosome, a large ribonucleoprotein complex responsible for the synthesis of proteins in the cell. The small ribosomal subunit (SSU) binds messenger RNAs (mRNAs) and translates the encoded message by selecting cognate aminoacyl-transfer RNA (tRNA) molecules. The large subunit (LSU) contains the ribosomal catalytic site termed the peptidyl transferase center (PTC), which catalyzes the formation of peptide bonds, thereby polymerizing the amino acids delivered by tRNAs into a polypeptide chain. The nascent polypeptides leave the ribosome through a tunnel in the LSU and interact with protein factors that function in enzymatic processing, targeting, and the membrane insertion of nascent chains at the exit of the ribosomal tunnel. uS19 is involved in the nuclear export of the small ribosomal subunit precursor. Has a role in the late stage of the assembly of pre-40S particles within the nucleus and controls their export to the cytoplasm. The polypeptide is Small ribosomal subunit protein uS19A (rps1501) (Schizosaccharomyces pombe (strain 972 / ATCC 24843) (Fission yeast)).